Reading from the N-terminus, the 317-residue chain is Probable cell division protein WhiA (317 aa).

The segment at residues 278-311 (SLQGLGELLDPQVGKSGVNHRLRKIGEKADELRQ) is a DNA-binding region (H-T-H motif).

Belongs to the WhiA family.

In terms of biological role, involved in cell division and chromosome segregation. The protein is Probable cell division protein WhiA of Lachnospira eligens (strain ATCC 27750 / DSM 3376 / VPI C15-48 / C15-B4) (Eubacterium eligens).